The chain runs to 119 residues: MLHWGPKFWRTLHLYAIFFSDTPGWKEKYEAIQWILNFIESLPCTMCRHHAFSYLTKNPLTLNNSEDFQYWTFAFHNNVNKRLNKKIISWSEYKNIYEQSILNTIEYGKTDFIGAWSSL.

The ERV/ALR sulfhydryl oxidase domain maps to 1–97; sequence MLHWGPKFWR…ISWSEYKNIY (97 aa). The cysteines at positions 44 and 47 are disulfide-linked.

Belongs to the asfivirus B119L family. Interacts with A151R. Requires FAD as cofactor.

Its subcellular location is the host cytoplasm. It localises to the virion. The enzyme catalyses 2 R'C(R)SH + O2 = R'C(R)S-S(R)CR' + H2O2. In terms of biological role, FAD-dependent sulfhydryl oxidase that catalyzes the formation of disulfide bonds in viral proteins produced in the cell cytoplasm. Involved in virion maturation. The sequence is that of FAD-linked sulfhydryl oxidase from Ornithodoros (relapsing fever ticks).